We begin with the raw amino-acid sequence, 243 residues long: 6-carboxyhexanoate--CoA ligase (243 aa).

It belongs to the BioW family. Homodimer. Requires Mg(2+) as cofactor.

The enzyme catalyses heptanedioate + ATP + CoA = 6-carboxyhexanoyl-CoA + AMP + diphosphate. Its pathway is metabolic intermediate metabolism; pimeloyl-CoA biosynthesis; pimeloyl-CoA from pimelate: step 1/1. Its function is as follows. Catalyzes the transformation of pimelate into pimeloyl-CoA with concomitant hydrolysis of ATP to AMP. The chain is 6-carboxyhexanoate--CoA ligase from Thermocrinis albus (strain DSM 14484 / JCM 11386 / HI 11/12).